We begin with the raw amino-acid sequence, 412 residues long: B3 domain-containing protein Os02g0683500 (412 aa).

Residues 1–87 (MEFTTSSRFS…GGGGGGGGEA (87 aa)) are disordered. Residues 30-65 (TATAEAAPAPTSSSSSPAHHAASASASASASGSSTP) are compositionally biased toward low complexity. Gly residues predominate over residues 73–86 (GASGSGGGGGGGGE). The TF-B3 DNA-binding region spans 96–200 (FDKVVTPSDV…RHRLFIDWKR (105 aa)). The segment at 374–412 (RLLELPPHHHHGAESSAASSPSSSSSSKRDAHSALDLDL) is disordered. Residues 387–399 (ESSAASSPSSSSS) are compositionally biased toward low complexity. Basic and acidic residues predominate over residues 400-412 (SKRDAHSALDLDL).

The protein resides in the nucleus. The polypeptide is B3 domain-containing protein Os02g0683500 (Oryza sativa subsp. japonica (Rice)).